A 292-amino-acid polypeptide reads, in one-letter code: Manganese transport system membrane protein MntC (292 aa).

The next 8 helical transmembrane spans lie at 20-40, 58-78, 96-116, 137-157, 168-188, 190-210, 226-246, and 249-269; these read ALTA…FIIL, VVIA…TGVI, SAIG…ITGM, TDLW…ILFY, VMAQ…MLLL, LVTV…MLIT, LCLA…FSVI, and VASG…AFFF.

The protein belongs to the ABC-3 integral membrane protein family.

It is found in the cell membrane. In terms of biological role, this protein is probably a component of a manganese permease, a binding protein-dependent, ATP-driven transport system. The protein is Manganese transport system membrane protein MntC (mntC) of Halalkalibacterium halodurans (strain ATCC BAA-125 / DSM 18197 / FERM 7344 / JCM 9153 / C-125) (Bacillus halodurans).